Reading from the N-terminus, the 36-residue chain is Alpha-conotoxin-like Pu1.3 (36 aa).

Positions 1–21 (SDGRNAGADRKGFGLISQMFK) are excised as a propeptide. Cystine bridges form between cysteine 24-cysteine 30 and cysteine 25-cysteine 36.

This sequence belongs to the conotoxin A superfamily. In terms of tissue distribution, expressed by the venom duct.

The protein resides in the secreted. Its function is as follows. Alpha-conotoxins act on postsynaptic membranes, they bind to the nicotinic acetylcholine receptors (nAChR) and thus inhibit them. The protein is Alpha-conotoxin-like Pu1.3 of Conus pulicarius (Flea-bitten cone).